The sequence spans 577 residues: Protein NUCLEOLAR COMPLEX ASSOCIATED 4 (577 aa).

The interval 230–263 is disordered; sequence PEKQAEKSQHEMWSGSDESISEKPTDKKKKTEKG. 3 consecutive transmembrane segments (helical) span residues 329–349, 350–370, and 404–424; these read IGGV…TQHG, LEYP…VFVA, and LSLS…YNLL.

It belongs to the CBF/MAK21 family. In terms of assembly, component of the ribosomal small subunit (SSU) processome composed of at least 40 protein subunits and snoRNA U3. In terms of tissue distribution, mostly expressed in flowers and stems and at lower levels in roots, hypocotyls, siliques, leaves and seeds.

It is found in the nucleus membrane. The protein resides in the nucleus. Its subcellular location is the nucleolus. Functionally, essential protein required during embryogenesis. Involved in nucleolar processing of ribosomal RNA (rRNA) 40S and 90S ribosomal subunits and ribosome assembly; early in ribosome biogenesis, especially required during the maturation of 5.8S rRNA. Has a role in the nuclear export of 40S pre-ribosomal subunit to the cytoplasm. The polypeptide is Protein NUCLEOLAR COMPLEX ASSOCIATED 4 (Arabidopsis thaliana (Mouse-ear cress)).